We begin with the raw amino-acid sequence, 283 residues long: MGQKIHPTGFRLAVSRNWASRWYAGNSNFATMLNEDLKVRAYLKTKLKNASVGRVVIERPAKNARITIYSSRPGVVIGKKGEDIEVLKSALTKMMGVPVHVNIEEIRKPETDAQLIADSIAQQLEKRIMFRRAMKRAMQNAMRLGAQGIKIMSSGRLNGIEIARKEWYREGRVPLHTLRADIDYGFGEAETTYGIIGIKVWVYKGDRLANGEAPVIDVASDDDKKRRGPRRDDGKPSGRPRAPRPEGQPGAAAPGSAPAAKRVRAKKPDGAVDAAVSAEKAGE.

Residues 39–107 enclose the KH type-2 domain; sequence VRAYLKTKLK…PVHVNIEEIR (69 aa). Residues 219–283 are disordered; sequence ASDDDKKRRG…AAVSAEKAGE (65 aa). Residues 221 to 236 are compositionally biased toward basic and acidic residues; sequence DDDKKRRGPRRDDGKP. Low complexity predominate over residues 237-260; that stretch reads SGRPRAPRPEGQPGAAAPGSAPAA.

Belongs to the universal ribosomal protein uS3 family. Part of the 30S ribosomal subunit. Forms a tight complex with proteins S10 and S14.

Functionally, binds the lower part of the 30S subunit head. Binds mRNA in the 70S ribosome, positioning it for translation. The polypeptide is Small ribosomal subunit protein uS3 (Janthinobacterium sp. (strain Marseille) (Minibacterium massiliensis)).